We begin with the raw amino-acid sequence, 152 residues long: MTSTLNTLKSNSGSRKKKLRKGRGIAAGQGASCGFGMRGQKSRSGRPTRPGFEGGQMPLYRRVPKLKHFEIINQKNFSIINLEKLNDFKDNDTVNLDSLVKKGLIFKPKFPLKILGNGKLNVKLKVQAHAFTKVAKQKIEDAGGSCELINNK.

A disordered region spans residues 1 to 57 (MTSTLNTLKSNSGSRKKKLRKGRGIAAGQGASCGFGMRGQKSRSGRPTRPGFEGGQM). Positions 14–23 (SRKKKLRKGR) are enriched in basic residues. Positions 25 to 37 (IAAGQGASCGFGM) are enriched in gly residues.

Belongs to the universal ribosomal protein uL15 family. In terms of assembly, part of the 50S ribosomal subunit.

Its function is as follows. Binds to the 23S rRNA. This Prochlorococcus marinus (strain MIT 9301) protein is Large ribosomal subunit protein uL15.